A 143-amino-acid chain; its full sequence is Transcription antitermination protein NusB (143 aa).

Belongs to the NusB family.

Its function is as follows. Involved in transcription antitermination. Required for transcription of ribosomal RNA (rRNA) genes. Binds specifically to the boxA antiterminator sequence of the ribosomal RNA (rrn) operons. This is Transcription antitermination protein NusB from Desulforapulum autotrophicum (strain ATCC 43914 / DSM 3382 / VKM B-1955 / HRM2) (Desulfobacterium autotrophicum).